Reading from the N-terminus, the 252-residue chain is uncharacterized protein (252 aa).

2 stretches are compositionally biased toward polar residues: residues 108–122 (RTTM…SSSE) and 136–153 (MPNT…NSQS). The interval 108–252 (RTTMRQGRFP…LIWNDSSSSK (145 aa)) is disordered. Over residues 154–172 (TEKEDAMYSKDNGFEDRSK) the composition is skewed to basic and acidic residues. Residues 201–226 (VKSTDSAFSGQENSEAFPSRTSNLGS) are compositionally biased toward polar residues.

Its subcellular location is the cytoplasm. The protein localises to the mitochondrion. It localises to the nucleus. This is an uncharacterized protein from Schizosaccharomyces pombe (strain 972 / ATCC 24843) (Fission yeast).